Consider the following 379-residue polypeptide: (R)-2-hydroxyglutaryl-CoA dehydratase, subunit beta (379 aa).

The protein belongs to the FldB/FldC dehydratase alpha/beta subunit family. As to quaternary structure, the (R)-2-hydroxyglutaryl-CoA dehydratase enzyme system is a heterodimer composed of an alpha subunit (HgdA) and a beta subunit (HgdB). [4Fe-4S] cluster is required as a cofactor. FMN serves as cofactor. It depends on Mg(2+) as a cofactor.

It is found in the cytoplasm. It catalyses the reaction (R)-2-hydroxyglutaryl-CoA = (2E)-glutaconyl-CoA + H2O. The protein operates within amino-acid degradation; L-glutamate degradation via hydroxyglutarate pathway; crotonoyl-CoA from L-glutamate: step 4/5. Its activity is regulated as follows. Activated by the HgdC. Reversibly inactivated by oxidants such as 2-nitrophenol, 3-nitrophenol, 4-nitrophenol, 4-nitrobenzoate, carbonyl cyanide 4-(trifluoromethoxy)phenylhydrazone (FCCP) and chloramphenicol. Irreversibly inactivated by oxidants such as hydroxylamine and nitrite. In terms of biological role, involved in the fermentation of L-glutamate via the hydroxyglutarate pathway. Catalyzes the reversible syn-elimination of water from (R)-2-hydroxyglutaryl-CoA to yield (E)-glutaconyl-CoA. The dehydration mechanism involves a transient one electron reduction of the thioester from (R)-2-hydroxyglutaryl-CoA, generating a ketyl radical. Prior to (E)-glutaconyl-CoA formation, the ketyl radical is subsequently reoxidized by electron transfer back to the HgdA-HgdB complex (CompD) to avoid change in oxidation state of the substrate. The appropriate redox state of dehydratase HgdA-HgdB complex (CompD) is maintained by HgdC (CompA) via hydrolysis of ATP and ATP-dependent electron transfer. Since the electron is recycled, the dehydratase is able to perform several turnovers with only catalytic amounts of ATP and substoichiometric amounts of HgdC (CompA). The polypeptide is (R)-2-hydroxyglutaryl-CoA dehydratase, subunit beta (Acidaminococcus fermentans (strain ATCC 25085 / DSM 20731 / CCUG 9996 / CIP 106432 / VR4)).